Here is a 507-residue protein sequence, read N- to C-terminus: Steroid (22S)-hydroxylase (507 aa).

The helical transmembrane segment at 12–32 (LLFFLPYILLALLTFYTTTVA) threads the bilayer. A heme-binding site is contributed by C444.

Belongs to the cytochrome P450 family. It depends on heme as a cofactor.

It is found in the membrane. It carries out the reaction a C27-steroid + reduced [NADPH--hemoprotein reductase] + O2 = a (22S)-22-hydroxy C27-steroid + oxidized [NADPH--hemoprotein reductase] + H2O + H(+). The catalysed reaction is a C28-steroid + reduced [NADPH--hemoprotein reductase] + O2 = a (22S)-22-hydroxy C28-steroid + oxidized [NADPH--hemoprotein reductase] + H2O + H(+). It catalyses the reaction campesterol + reduced [NADPH--hemoprotein reductase] + O2 = (22S)-22-hydroxycampesterol + oxidized [NADPH--hemoprotein reductase] + H2O + H(+). The enzyme catalyses campestanol + reduced [NADPH--hemoprotein reductase] + O2 = 6-deoxycathasterone + oxidized [NADPH--hemoprotein reductase] + H2O + H(+). It participates in plant hormone biosynthesis; brassinosteroid biosynthesis. Its function is as follows. Involved in reduction steps of the biosynthesis of plant campesterol-derivative steroids, ending to castasterone (CS) but missing brassinolide (BL). Catalyzes the conversion of campesterol (CR) to (22S)-22-hydroxycampesterol (22-OHCR, 22-hydroxyCR) and of campestanol (CN) to 6-deoxycathasterone (6-deoxoCT). This chain is Steroid (22S)-hydroxylase, found in Brachypodium distachyon (Purple false brome).